A 256-amino-acid polypeptide reads, in one-letter code: Galactitol 2-dehydrogenase (256 aa).

Residues 15–17, aspartate 36, 59–60, asparagine 86, tyrosine 152, and lysine 156 each bind NAD(+); these read RGI and DV. The Proton acceptor role is filled by tyrosine 152.

Belongs to the short-chain dehydrogenases/reductases (SDR) family.

It catalyses the reaction galactitol + NAD(+) = keto-D-tagatose + NADH + H(+). The enzyme catalyses keto-D-fructose + NADH + H(+) = D-sorbitol + NAD(+). It functions in the pathway carbohydrate metabolism. In terms of biological role, involved in galactitol catabolism. Catalyzes the oxidation of galactitol to D-tagatose. Can also catalyze the oxidation of D-sorbitol to D-fructose. This Agrobacterium fabrum (strain C58 / ATCC 33970) (Agrobacterium tumefaciens (strain C58)) protein is Galactitol 2-dehydrogenase.